Here is a 404-residue protein sequence, read N- to C-terminus: Probable tRNA sulfurtransferase (404 aa).

Residues 60–165 form the THUMP domain; the sequence is QPVAESLKQI…EEAAYISYET (106 aa). ATP is bound by residues 183–184, 208–209, arginine 265, glycine 287, and glutamine 296; these read ML and HF.

It belongs to the ThiI family.

Its subcellular location is the cytoplasm. The enzyme catalyses [ThiI sulfur-carrier protein]-S-sulfanyl-L-cysteine + a uridine in tRNA + 2 reduced [2Fe-2S]-[ferredoxin] + ATP + H(+) = [ThiI sulfur-carrier protein]-L-cysteine + a 4-thiouridine in tRNA + 2 oxidized [2Fe-2S]-[ferredoxin] + AMP + diphosphate. It catalyses the reaction [ThiS sulfur-carrier protein]-C-terminal Gly-Gly-AMP + S-sulfanyl-L-cysteinyl-[cysteine desulfurase] + AH2 = [ThiS sulfur-carrier protein]-C-terminal-Gly-aminoethanethioate + L-cysteinyl-[cysteine desulfurase] + A + AMP + 2 H(+). The protein operates within cofactor biosynthesis; thiamine diphosphate biosynthesis. Functionally, catalyzes the ATP-dependent transfer of a sulfur to tRNA to produce 4-thiouridine in position 8 of tRNAs, which functions as a near-UV photosensor. Also catalyzes the transfer of sulfur to the sulfur carrier protein ThiS, forming ThiS-thiocarboxylate. This is a step in the synthesis of thiazole, in the thiamine biosynthesis pathway. The sulfur is donated as persulfide by IscS. This Streptococcus gordonii (strain Challis / ATCC 35105 / BCRC 15272 / CH1 / DL1 / V288) protein is Probable tRNA sulfurtransferase.